The primary structure comprises 183 residues: Dual-action ribosomal maturation protein DarP (183 aa).

A disordered region spans residues 1-27 (MSSHSQEPVGEENFDDSEYDRPSKSQV). Residues 9–18 (VGEENFDDSE) are compositionally biased toward acidic residues.

Belongs to the DarP family.

It is found in the cytoplasm. Functionally, member of a network of 50S ribosomal subunit biogenesis factors which assembles along the 30S-50S interface, preventing incorrect 23S rRNA structures from forming. Promotes peptidyl transferase center (PTC) maturation. This chain is Dual-action ribosomal maturation protein DarP, found in Bordetella parapertussis (strain 12822 / ATCC BAA-587 / NCTC 13253).